A 600-amino-acid chain; its full sequence is Elongation factor 4 (600 aa).

The tr-type G domain occupies 4–186; that stretch reads KNVRNFCIIA…AIVNRIPPPK (183 aa). GTP-binding positions include 16 to 21 and 133 to 136; these read DHGKST and NKID.

The protein belongs to the TRAFAC class translation factor GTPase superfamily. Classic translation factor GTPase family. LepA subfamily.

It localises to the cell inner membrane. The catalysed reaction is GTP + H2O = GDP + phosphate + H(+). Required for accurate and efficient protein synthesis under certain stress conditions. May act as a fidelity factor of the translation reaction, by catalyzing a one-codon backward translocation of tRNAs on improperly translocated ribosomes. Back-translocation proceeds from a post-translocation (POST) complex to a pre-translocation (PRE) complex, thus giving elongation factor G a second chance to translocate the tRNAs correctly. Binds to ribosomes in a GTP-dependent manner. The protein is Elongation factor 4 of Aquifex aeolicus (strain VF5).